We begin with the raw amino-acid sequence, 669 residues long: Filensin (669 aa).

The segment at 1–33 (MYRRSYVFQARQERYERAQPAGPAAQPGGTAPG) is head. Residue Ser5 is modified to Phosphoserine. One can recognise an IF rod domain in the interval 33–318 (GLAALQALGE…RIIEIEGSRL (286 aa)). Positions 34-68 (LAALQALGERVAVQVQRARALQQRHAGLRRQLDAF) are coil 1A. Ala35 bears the N-acetylalanine mark. The tract at residues 69–77 (QRLGEQPGP) is linker 1. The segment at 78-177 (EDALARHVEA…RYKKNLLEIQ (100 aa)) is coil 1B. The segment at 178-194 (TYITVLQQIVQTAPQVS) is linker 12. A coil 2 region spans residues 195–318 (LVTGMRESGL…RIIEIEGSRL (124 aa)). A tail region spans residues 319-669 (SSVFIETPIS…GEKSLPDTRA (351 aa)). Ser339 is modified (phosphoserine). 3 disordered regions span residues 380-435 (VEET…GGQI), 449-468 (RVSGHKEPEPEPPTDLFTKG), and 505-618 (HHDG…KALS). Over residues 408–417 (SQPGAGGGHG) the composition is skewed to gly residues. Gly432 carries the N-myristoyl glycine lipid modification. Ser513 carries the post-translational modification Phosphoserine. Positions 545–570 (NGLRAKEPKDLEEKDDDGKKEAEGSR) are enriched in basic and acidic residues. The span at 583 to 593 (PSTSHSQTSGS) shows a compositional bias: polar residues. Phosphothreonine is present on Thr585.

Belongs to the intermediate filament family. Part of a complex required for lens intermediate filament formation composed of BFSP1, BFSP2 and CRYAA. Identified in a complex that contains VIM, EZR, AHNAK, BFSP1, BFSP2, ANK2, PLEC, PRX and spectrin. Found in a complex composed of PPL (via C-terminal linker domain), BFSP1 and BFSP2 in the retinal lens. Within the complex interacts with BFSP2. Interacts (via C-terminus) with MIP (via C-terminus) in aged lens fiber cells. In terms of processing, proteolytically cleaved during lens cell fiber differentiation with increased fragmentation as fiber cell age increases. Myristoylated at Gly-432 following proteolytic cleavage at Asp-431. Post-translationally, acetylated at Ala-35 following proteolytic cleavage at Leu-34. In terms of tissue distribution, detected in eye lens fiber cells (at protein level). Expressed in retinal lens epithelial cells (at protein level).

Its subcellular location is the cell membrane. It localises to the cytoplasm. It is found in the cytoskeleton. The protein localises to the cell cortex. Required for the correct formation of lens intermediate filaments as part of a complex composed of BFSP1, BFSP2 and CRYAA. Involved in altering the calcium regulation of MIP water permeability. The polypeptide is Filensin (Bfsp1) (Mus musculus (Mouse)).